We begin with the raw amino-acid sequence, 1125 residues long: RGS domain-containing serine/threonine-protein kinase A (1125 aa).

4 disordered regions span residues 1–77 (MKTS…GGNK), 96–191 (RRNS…IVDD), 276–416 (GISP…NNTN), and 455–480 (YVGG…PAPE). 2 stretches are compositionally biased toward low complexity: residues 7-30 (SSNS…NNNN) and 37-66 (SSKS…LSSG). Basic and acidic residues predominate over residues 121 to 136 (LDSKPPKPFDEKDDPI). 2 stretches are compositionally biased toward low complexity: residues 159–191 (QPQQ…IVDD) and 281–342 (NNNN…LNNS). The segment covering 343–361 (PRYLNSSSSPRSMQHLSSK) has biased composition (polar residues). Residues 362 to 416 (ITTTTTTTTTTTTTTSDDNNGNTNNNISNNNNIINNSNNNSNSNNNNNNNINNTN) show a composition bias toward low complexity. The 117-residue stretch at 487 to 603 (KFIETITDPT…ISSPFNPEWK (117 aa)) folds into the RGS domain. A compositionally biased stretch (low complexity) spans 617–685 (TTTQPINNFN…NNSNGSNTSS (69 aa)). Disordered regions lie at residues 617 to 710 (TTTQ…KERS) and 723 to 762 (NLSN…SNNN). Residues 690–710 (ERLDNIKGNRERVDSNGKERS) show a composition bias toward basic and acidic residues. Low complexity predominate over residues 723–735 (NLSNHSNSSSNSN). The span at 736-748 (GKDKDKDKDKNEN) shows a compositional bias: basic and acidic residues. A compositionally biased stretch (low complexity) spans 749–762 (TTDNSNNNNNSNNN). The 256-residue stretch at 842–1097 (VSIHKWIASG…YLESIIYPSV (256 aa)) folds into the Protein kinase domain. ATP is bound by residues 848 to 856 (IASGSSGRV) and Lys869. Asp963 functions as the Proton acceptor in the catalytic mechanism.

The protein belongs to the protein kinase superfamily. TKL Ser/Thr protein kinase family. Autophosphorylated.

It localises to the cytoplasm. The protein localises to the cell membrane. It carries out the reaction L-seryl-[protein] + ATP = O-phospho-L-seryl-[protein] + ADP + H(+). It catalyses the reaction L-threonyl-[protein] + ATP = O-phospho-L-threonyl-[protein] + ADP + H(+). Up-regulated by cAMP. Functionally, serine/threonine kinase involved in negative regulation of chemotaxis. The protein is RGS domain-containing serine/threonine-protein kinase A (rckA) of Dictyostelium discoideum (Social amoeba).